The chain runs to 107 residues: Inner membrane protein YgbE (107 aa).

Residues 1 to 20 (MRNSHNITLTNNDSLTEDEE) lie on the Cytoplasmic side of the membrane. The helical transmembrane segment at 21–43 (TTWSLPGAVVGFISWLFALAMPM) threads the bilayer. At 44–52 (LIYGSNTLF) the chain is on the periplasmic side. A helical membrane pass occupies residues 53–75 (FFIYTWPFFLALMPVAVVVGIAL). Residues 76–86 (HSLMDGKLRYS) are Cytoplasmic-facing. A helical transmembrane segment spans residues 87–106 (IVFTLVTVGIMFGALFMWLL). Residue glycine 107 is a topological domain, periplasmic.

The protein resides in the cell inner membrane. This is Inner membrane protein YgbE (ygbE) from Escherichia coli (strain K12).